The following is a 232-amino-acid chain: Large ribosomal subunit protein uL1 (232 aa).

Belongs to the universal ribosomal protein uL1 family. In terms of assembly, part of the 50S ribosomal subunit.

Binds directly to 23S rRNA. The L1 stalk is quite mobile in the ribosome, and is involved in E site tRNA release. Functionally, protein L1 is also a translational repressor protein, it controls the translation of the L11 operon by binding to its mRNA. In Variovorax paradoxus (strain S110), this protein is Large ribosomal subunit protein uL1.